Here is a 1405-residue protein sequence, read N- to C-terminus: DNA-directed RNA polymerase subunit beta' (1405 aa).

Residues C70, C72, C85, and C88 each contribute to the Zn(2+) site. Mg(2+)-binding residues include D460, D462, and D464. The Zn(2+) site is built by C814, C888, C895, and C898.

Belongs to the RNA polymerase beta' chain family. The RNAP catalytic core consists of 2 alpha, 1 beta, 1 beta' and 1 omega subunit. When a sigma factor is associated with the core the holoenzyme is formed, which can initiate transcription. Requires Mg(2+) as cofactor. Zn(2+) is required as a cofactor.

It catalyses the reaction RNA(n) + a ribonucleoside 5'-triphosphate = RNA(n+1) + diphosphate. Its function is as follows. DNA-dependent RNA polymerase catalyzes the transcription of DNA into RNA using the four ribonucleoside triphosphates as substrates. The polypeptide is DNA-directed RNA polymerase subunit beta' (Shewanella oneidensis (strain ATCC 700550 / JCM 31522 / CIP 106686 / LMG 19005 / NCIMB 14063 / MR-1)).